A 418-amino-acid polypeptide reads, in one-letter code: Tyrosine--tRNA ligase (418 aa).

Position 34 (tyrosine 34) interacts with L-tyrosine. Residues 39 to 48 (PTADSLHLGH) carry the 'HIGH' region motif. L-tyrosine is bound by residues tyrosine 169 and glutamine 173. A 'KMSKS' region motif is present at residues 229–233 (KFGKS). Residue lysine 232 participates in ATP binding. The 67-residue stretch at 352-418 (NNIVELLVSS…GKKKYFVLTY (67 aa)) folds into the S4 RNA-binding domain.

The protein belongs to the class-I aminoacyl-tRNA synthetase family. TyrS type 1 subfamily. Homodimer.

It localises to the cytoplasm. The catalysed reaction is tRNA(Tyr) + L-tyrosine + ATP = L-tyrosyl-tRNA(Tyr) + AMP + diphosphate + H(+). Catalyzes the attachment of tyrosine to tRNA(Tyr) in a two-step reaction: tyrosine is first activated by ATP to form Tyr-AMP and then transferred to the acceptor end of tRNA(Tyr). The sequence is that of Tyrosine--tRNA ligase from Streptococcus pneumoniae (strain Taiwan19F-14).